A 145-amino-acid chain; its full sequence is Ecdysteroid-regulated 16 kDa protein (145 aa).

The first 16 residues, 1–16 (MLFYITVTVLLVSAQA), serve as a signal peptide directing secretion. Intrachain disulfides connect C22–C137 and C90–C97. N51 is a glycosylation site (N-linked (GlcNAc...) asparagine).

The protein belongs to the NPC2 family.

The protein localises to the secreted. The sequence is that of Ecdysteroid-regulated 16 kDa protein (ESR16) from Manduca sexta (Tobacco hawkmoth).